The primary structure comprises 123 residues: Putative iron-sulfur cluster insertion protein ErpA (123 aa).

Residues Cys51, Cys115, and Cys117 each contribute to the iron-sulfur cluster site.

This sequence belongs to the HesB/IscA family. In terms of assembly, homodimer. It depends on iron-sulfur cluster as a cofactor.

Required for insertion of 4Fe-4S clusters. This Burkholderia lata (strain ATCC 17760 / DSM 23089 / LMG 22485 / NCIMB 9086 / R18194 / 383) protein is Putative iron-sulfur cluster insertion protein ErpA.